The sequence spans 335 residues: uncharacterized protein (335 aa).

Residues 201–236 are disordered; sequence GPMAKNKARRKEDNYDTHNCDDANQDKKEEAEGKNT. A compositionally biased stretch (basic and acidic residues) spans 210-235; sequence RKEDNYDTHNCDDANQDKKEEAEGKN.

In terms of biological role, dispensable for normal development and fertility. This is an uncharacterized protein from Homo sapiens (Human).